The following is a 496-amino-acid chain: NADP-dependent glyceraldehyde-3-phosphate dehydrogenase (496 aa).

Substrate-binding positions include R116 and 169-170; that span reads NY. 3 residues coordinate NADP(+): K192, T195, and D230. 245–249 serves as a coordination point for NAD(+); sequence GGDTG. Residue E264 is the Proton acceptor of the active site. A substrate-binding site is contributed by 297 to 299; that stretch reads RCT. Catalysis depends on C298, which acts as the Nucleophile. E391 lines the NADP(+) pocket. R451 contributes to the substrate binding site.

Belongs to the aldehyde dehydrogenase family.

It localises to the cytoplasm. The enzyme catalyses D-glyceraldehyde 3-phosphate + NADP(+) + H2O = (2R)-3-phosphoglycerate + NADPH + 2 H(+). Important as a means of generating NADPH for biosynthetic reactions. This chain is NADP-dependent glyceraldehyde-3-phosphate dehydrogenase (GAPN), found in Pisum sativum (Garden pea).